The sequence spans 227 residues: MTGRFDWRGQGGHTEASTKAIVFVVEDDISMRRSLTNLFRSVGLEVVAFGSAREMLQSTMPDVTSCLVLDVRLPGLSGLDYQTELARLNIHIPIIFITGHGDIPMTVRAMKGGAVDFLSKPFRDQELLDAVVAATERDRKRREAQRTVANLKSLFETLSPREQAVMKLVATGLMNKQVAAELGLAEITVKIYRGHVMKKMRARSLADLIRMSETLGISANHTEQTQV.

Residues 21–135 (IVFVVEDDIS…ELLDAVVAAT (115 aa)) enclose the Response regulatory domain. Asp70 is modified (4-aspartylphosphate). The 66-residue stretch at 151 to 216 (LKSLFETLSP…DLIRMSETLG (66 aa)) folds into the HTH luxR-type domain. The H-T-H motif DNA-binding region spans 175–194 (NKQVAAELGLAEITVKIYRG).

In terms of processing, phosphorylated by NodV.

It is found in the cytoplasm. Functionally, member of the two-component regulatory system NodV/NodW probably involved in the regulation of the transcription of genes involved in the nodulation process. This Bradyrhizobium diazoefficiens (strain JCM 10833 / BCRC 13528 / IAM 13628 / NBRC 14792 / USDA 110) protein is Nodulation protein W (nodW).